The primary structure comprises 141 residues: Protein X (141 aa).

Low complexity predominate over residues 25 to 48 (SSGPSFPRPAAGSAASSASSPSPS). Positions 25-52 (SSGPSFPRPAAGSAASSASSPSPSDESD) are disordered. A mitochondrial targeting sequence region spans residues 68-113 (PCCLVFTCADLRTMDSTVNFVSWHANRQLGMPSKDLWTPYIKDQLL).

It belongs to the orthohepadnavirus protein X family. In terms of assembly, may form homodimer. May interact with host CEBPA, CFLAR, CREB1, DDB1, E4F1, HBXIP, HSPD1/HSP60, NFKBIA, POLR2E and SMAD4. Interacts with host SMC5-SMC6 complex and induces its degradation. Interacts with host TRPC4AP; leading to prevent ubiquitination of TRPC4AP. Interacts with host PLSCR1; this interaction promotes ubiquitination and degradation of HBx and impairs HBx-mediated cell proliferation. In terms of processing, a fraction may be phosphorylated in insect cells and HepG2 cells, a human hepatoblastoma cell line. Phosphorylated in vitro by host protein kinase C or mitogen-activated protein kinase. N-acetylated in insect cells.

The protein resides in the host cytoplasm. The protein localises to the host nucleus. Its subcellular location is the host mitochondrion. Its function is as follows. Multifunctional protein that plays a role in silencing host antiviral defenses and promoting viral transcription. Does not seem to be essential for HBV infection. May be directly involved in development of cirrhosis and liver cancer (hepatocellular carcinoma). Most of cytosolic activities involve modulation of cytosolic calcium. The effect on apoptosis is controversial depending on the cell types in which the studies have been conducted. May induce apoptosis by localizing in mitochondria and causing loss of mitochondrial membrane potential. May also modulate apoptosis by binding host CFLAR, a key regulator of the death-inducing signaling complex (DISC). Promotes viral transcription by using the host E3 ubiquitin ligase DDB1 to target the SMC5-SMC6 complex to proteasomal degradation. This host complex would otherwise bind to viral episomal DNA, and prevents its transcription. Moderately stimulates transcription of many different viral and cellular transcription elements. Promoters and enhancers stimulated by HBx contain DNA binding sites for NF-kappa-B, AP-1, AP-2, c-EBP, ATF/CREB, or the calcium-activated factor NF-AT. In Marmota monax (Woodchuck), this protein is Protein X.